We begin with the raw amino-acid sequence, 420 residues long: Gamma-glutamyl phosphate reductase (420 aa).

This sequence belongs to the gamma-glutamyl phosphate reductase family.

Its subcellular location is the cytoplasm. It catalyses the reaction L-glutamate 5-semialdehyde + phosphate + NADP(+) = L-glutamyl 5-phosphate + NADPH + H(+). The protein operates within amino-acid biosynthesis; L-proline biosynthesis; L-glutamate 5-semialdehyde from L-glutamate: step 2/2. Catalyzes the NADPH-dependent reduction of L-glutamate 5-phosphate into L-glutamate 5-semialdehyde and phosphate. The product spontaneously undergoes cyclization to form 1-pyrroline-5-carboxylate. The chain is Gamma-glutamyl phosphate reductase from Streptococcus sanguinis (strain SK36).